Here is a 177-residue protein sequence, read N- to C-terminus: Protein-export protein SecB (177 aa).

This sequence belongs to the SecB family. Homotetramer, a dimer of dimers. One homotetramer interacts with 1 SecA dimer.

Its subcellular location is the cytoplasm. In terms of biological role, one of the proteins required for the normal export of preproteins out of the cell cytoplasm. It is a molecular chaperone that binds to a subset of precursor proteins, maintaining them in a translocation-competent state. It also specifically binds to its receptor SecA. The polypeptide is Protein-export protein SecB (Ehrlichia canis (strain Jake)).